The primary structure comprises 395 residues: MAKEKFERKKPHVNIGTIGHVDHGKTTLTAAITAVLAKQGKAQARAYDQIDAAPEERERGITISTSHVEYETDNRHYAHVDCPGHADYVKNMITGAAQMDGAILVVSAADGPMPQTREHILLSRQVGVPYIVVFLNKCDMVDDEELLELVEMEVRDLLSEYDFPGDEVPVIKGSALKALEGDPQWEEKIIELMNAVDEYIPTPQREIDKPFMMPIEDVFSITGRGTVATGRVERGTLKVGDAVEIVGLADEPKSTTVTGVEMFRKLLDQAEAGDNIGALLRGVSRDEVERGQVLAKPGSITPHTKFKAQVYVLTKEEGGRHTPFFSNYRPQFYFRTTDVTGIITLPEGVEMVMPGDNVEMTVELIAPIAIEEGTKFSIREGGRTVGAGSVSEIIE.

Positions 10–204 (KPHVNIGTIG…AVDEYIPTPQ (195 aa)) constitute a tr-type G domain. Residues 19-26 (GHVDHGKT) are G1. Residue 19–26 (GHVDHGKT) coordinates GTP. Thr26 lines the Mg(2+) pocket. Residues 60 to 64 (GITIS) form a G2 region. A G3 region spans residues 81-84 (DCPG). Residues 81–85 (DCPGH) and 136–139 (NKCD) each bind GTP. The interval 136–139 (NKCD) is G4. The G5 stretch occupies residues 174–176 (SAL).

It belongs to the TRAFAC class translation factor GTPase superfamily. Classic translation factor GTPase family. EF-Tu/EF-1A subfamily. In terms of assembly, monomer.

The protein resides in the cytoplasm. The catalysed reaction is GTP + H2O = GDP + phosphate + H(+). Its function is as follows. GTP hydrolase that promotes the GTP-dependent binding of aminoacyl-tRNA to the A-site of ribosomes during protein biosynthesis. The polypeptide is Elongation factor Tu (Geobacillus sp. (strain WCH70)).